A 516-amino-acid polypeptide reads, in one-letter code: Probable inactive beta-glucosidase 14 (516 aa).

An N-terminal signal peptide occupies residues 1–23 (MAAAWLVVLLTVHRLLHLSGVSA). A beta-D-glucoside contacts are provided by residues Gln-43, His-145, and 190 to 191 (NQ). Asn-193 is a glycosylation site (N-linked (GlcNAc...) asparagine). A disulfide bridge links Cys-210 with Cys-217. N-linked (GlcNAc...) asparagine glycosylation is found at Asn-221 and Asn-270. Tyr-334 lines the a beta-D-glucoside pocket. Cys-342 and Cys-347 are oxidised to a cystine. Position 405 (Glu-405) interacts with a beta-D-glucoside. The active-site Nucleophile is Glu-405. N-linked (GlcNAc...) asparagine glycosylation is found at Asn-415 and Asn-423. Residues Trp-454, 461-462 (EW), and Phe-470 each bind a beta-D-glucoside.

It belongs to the glycosyl hydrolase 1 family. As to expression, expressed in flowers and endosperm.

The sequence is that of Probable inactive beta-glucosidase 14 from Oryza sativa subsp. japonica (Rice).